The chain runs to 696 residues: MTRSVYVTGIDRGDGRQVVELGVMELLTRQVDRVGVFRPLVHDGPDRLFELLRARYRLAQDPATVYGMDYHEASALQAEQGTDELMSTLVDRFHLVARDYDVVLVLGTDFADTQFPDELALNARLANEFGAAVIPVVGGRGQTAESVRAETRNAYRAYEGLGCDVLAMVVNRVAREDREELAARLDSLLAVPCYVLPDEPALSAPTVAQITHALGGKVLLGDDSGLARDALDFVFGGAMLPNFLNALTPGCLVVTPGDRADLVVGALAAHSAGTPPIAGVLLTLDERPSDEVLTLAARLAPGTPVVSVAGTSFPTAAELFSLEGKLNAATPRKAETALGLFERYVDTGDLLKRVSAPSSDRLTPMMFEHKLLEQARSDKRRVVLPEGTETRVLHAAEVLLRRGVCDLTLLGPVDQIRKKAADLGIDLGGSQLIDPVTSQLRDSFAEKYAQLRAHKGVSVELAYDVVADVNYFGTLMVQEGLADGMVSGSVHSTAATIRPAFEIIKTKPDTKIVSSVFFMCLADKVLVYGDCAVNPDPNAEQLCDIAVQSAATARQFGVEPRIAMLSYSTGTSGSGADVDKVREATELVRLRRDDLKIEGPIQYDAAVEPSVAATKLPGSDVAGQASVLIFPDLNTGNNTYKAVQRSAGAIAVGPVMQGLRKPVNDLSRGALVQDIVNTVAITAIQAQSPHEKATAQ.

The tract at residues 367–696 is phosphate acetyltransferase; sequence FEHKLLEQAR…QSPHEKATAQ (330 aa).

In the N-terminal section; belongs to the CobB/CobQ family. This sequence in the C-terminal section; belongs to the phosphate acetyltransferase and butyryltransferase family.

It localises to the cytoplasm. The catalysed reaction is acetyl-CoA + phosphate = acetyl phosphate + CoA. Its pathway is metabolic intermediate biosynthesis; acetyl-CoA biosynthesis; acetyl-CoA from acetate: step 2/2. Functionally, involved in acetate metabolism. The chain is Phosphate acetyltransferase (pta) from Streptomyces avermitilis (strain ATCC 31267 / DSM 46492 / JCM 5070 / NBRC 14893 / NCIMB 12804 / NRRL 8165 / MA-4680).